A 532-amino-acid polypeptide reads, in one-letter code: MRPSTASTPLSSSALNYLESFERNAKALRGNNNGSSTSGGNKKDESSTSKSIVSSPAPVKRRVSISDIISQARRQVSLSRTDSEDFDFLNESLKSSVFDESVSSDTDSEESHEEKRILPLGTPGQQVGRKSLKDIRELRNSIDQSLIKPPELKMLRSKAAGEESKRHAHFESIQEEEKISEDLPTAQLPSKSPFKKAIQSGSESSDSDSIIFDEVFEEVLPSPPRKPAPARTAPIVVEKKIEKPAVKEQKARKKKEKTPTPTESSFESSSDSSSTSESSTSSESSSSASESESESKSESQVSSSKTSTSKASSSKAYGSDFESEKSSSSSASTISKVTPKKLDKPQKTKKPDKKRAKPDDIRQNKKPEPIPYEDFIPKLSSRSSNSEKSTVRETNRTLEESLKKTLKINKSSEKMEKPRKDIRRAPRSSSSSSSTLRDAEREQDIERRREKRARRFRSRRRRSEEPHTCQENIHNMIESVIDTHVQMLDDFNRMEYAAVCEWTQVLRKFDGHDGPSSQKLREIIERRLNRKY.

Disordered regions lie at residues 26–84 (KALR…TDSE), 97–129 (VFDE…QVGR), and 157–470 (SKAA…HTCQ). A compositionally biased stretch (low complexity) spans 30 to 40 (GNNNGSSTSGG). Over residues 67-80 (DIISQARRQVSLSR) the composition is skewed to polar residues. Residues 157-181 (SKAAGEESKRHAHFESIQEEEKISE) are compositionally biased toward basic and acidic residues. The span at 198–213 (IQSGSESSDSDSIIFD) shows a compositional bias: low complexity. The span at 237–249 (VEKKIEKPAVKEQ) shows a compositional bias: basic and acidic residues. Low complexity-rich tracts occupy residues 259–290 (PTPT…SASE), 298–315 (ESQV…SSSK), and 326–335 (SSSSSASTIS). Residues 347–356 (KTKKPDKKRA) show a composition bias toward basic residues. 4 stretches are compositionally biased toward basic and acidic residues: residues 357-368 (KPDDIRQNKKPE), 389-403 (STVR…ESLK), 410-419 (KSSEKMEKPR), and 437-448 (RDAEREQDIERR). The segment covering 449 to 461 (REKRARRFRSRRR) has biased composition (basic residues).

This is an uncharacterized protein from Caenorhabditis elegans.